The sequence spans 700 residues: Polyribonucleotide nucleotidyltransferase (700 aa).

Mg(2+) contacts are provided by Asp491 and Asp497. The 60-residue stretch at 558-617 (PNYAVIEINPDKIRDVIGKGGATIRQLTEETGAVIDIDDAGTIRIFGENKAATKAAIAKI) folds into the KH domain. One can recognise an S1 motif domain in the interval 627 to 695 (GKTYEGTVAR…NRGRIKLTMK (69 aa)).

Belongs to the polyribonucleotide nucleotidyltransferase family. Component of the RNA degradosome, which is a multiprotein complex involved in RNA processing and mRNA degradation. Mg(2+) serves as cofactor.

The protein localises to the cytoplasm. The catalysed reaction is RNA(n+1) + phosphate = RNA(n) + a ribonucleoside 5'-diphosphate. In terms of biological role, involved in mRNA degradation. Catalyzes the phosphorolysis of single-stranded polyribonucleotides processively in the 3'- to 5'-direction. This Psychrobacter arcticus (strain DSM 17307 / VKM B-2377 / 273-4) protein is Polyribonucleotide nucleotidyltransferase.